Here is a 403-residue protein sequence, read N- to C-terminus: PP2A regulatory subunit TAP46 (403 aa).

2 disordered regions span residues 158–184 and 351–403; these read ERRG…LDDD and ANSS…TPCG. 2 stretches are compositionally biased toward acidic residues: residues 174–184 and 366–375; these read ETEEDDVLDDD and EDDEEDDDDA. Residues 376 to 391 show a composition bias toward basic and acidic residues; that stretch reads AQDKARAWDDWKDDNP.

This sequence belongs to the IGBP1/TAP42 family. As to quaternary structure, interacts with NPP4 and NPP5, two catalytic subunits (subunit C) of PP2A.

Its subcellular location is the cytoplasm. The protein localises to the nucleus. Its function is as follows. Involved in the regulation of the TOR signaling pathway. Seems to act as a regulator of PP2A catalytic activity. The protein is PP2A regulatory subunit TAP46 of Nicotiana benthamiana.